A 295-amino-acid polypeptide reads, in one-letter code: Acetylglutamate kinase (295 aa).

Substrate contacts are provided by residues 66 to 67 (GG), arginine 88, and asparagine 193.

The protein belongs to the acetylglutamate kinase family. ArgB subfamily.

It localises to the cytoplasm. The catalysed reaction is N-acetyl-L-glutamate + ATP = N-acetyl-L-glutamyl 5-phosphate + ADP. Its pathway is amino-acid biosynthesis; L-arginine biosynthesis; N(2)-acetyl-L-ornithine from L-glutamate: step 2/4. Its function is as follows. Catalyzes the ATP-dependent phosphorylation of N-acetyl-L-glutamate. The polypeptide is Acetylglutamate kinase (Bradyrhizobium diazoefficiens (strain JCM 10833 / BCRC 13528 / IAM 13628 / NBRC 14792 / USDA 110)).